Reading from the N-terminus, the 89-residue chain is Small ribosomal subunit protein uS17 (89 aa).

This sequence belongs to the universal ribosomal protein uS17 family. Part of the 30S ribosomal subunit.

In terms of biological role, one of the primary rRNA binding proteins, it binds specifically to the 5'-end of 16S ribosomal RNA. This is Small ribosomal subunit protein uS17 from Coxiella burnetii (strain RSA 493 / Nine Mile phase I).